Reading from the N-terminus, the 500-residue chain is Lycopene beta cyclase, chloroplastic (500 aa).

The N-terminal 81 residues, Met1–Gly81, are a transit peptide targeting the chloroplast. Leu86–Pro114 is a binding site for NAD(+).

This sequence belongs to the lycopene cyclase family.

Its subcellular location is the plastid. The protein resides in the chloroplast. The enzyme catalyses a carotenoid psi-end group = a carotenoid beta-end derivative. It functions in the pathway carotenoid biosynthesis; beta-carotene biosynthesis. It participates in carotenoid biosynthesis; beta-zeacarotene biosynthesis. Functionally, catalyzes the double cyclization reaction which converts lycopene to beta-carotene and neurosporene to beta-zeacarotene. The protein is Lycopene beta cyclase, chloroplastic (LCY1) of Solanum lycopersicum (Tomato).